A 596-amino-acid chain; its full sequence is MNENIEKKLSILPQQPGCYLMKDKNGTVIYVGKSKKLRNRVRSYFRGANDRKTQRLVQEIRDFEYMVTSSEIEALILEMNLIKKYDPRYNVMLKDDKSYPYLKITSERHPRLIVTRRLKKDKGKYFGPYPNVIAARETKKLLDRMYPLRKCNNPSGRPCLYYHMGQCKACAENPPSVKEYQEIVQEISSFLQGGFKDIRKNLAGEMQKASEALNFERAKEIRDTIQHIDATMEQQKMTLTDQMDRDIFGYSYDKGWMCVQVFFIRQGKLIERDTSVFPFFDSPEETIVSFIGRFYLHENHLKPKQVLVPVGIDNELLAKVLEIQVHIPLRGRKKELVQLAVKNAEISLNEKFQLIEKDEERTIQAIEDLGEQLNIETPHRIEAFDNSNIQGTDPVSAMIVFEDGKPNKKEYRKYKIRDVKGPDDYDTMREVVRRRYSRVLKENLPLPDLIIVDGGKGQMSAALEVLEDELGLDIPLAGLAKDDRHKTSELLYGMPPIVVPLERQSQAFYLVQRIQDEVHRFAITFHRQLRGKSLFQSELDKIPGVGEKRRKLLLSHFKSINQIKKASIEDMRKLGIPSNIAELVLNHLNSPNDDET.

One can recognise a GIY-YIG domain in the interval Q14–V91. Residues K196–T231 form the UVR domain.

Belongs to the UvrC family. As to quaternary structure, interacts with UvrB in an incision complex.

Its subcellular location is the cytoplasm. In terms of biological role, the UvrABC repair system catalyzes the recognition and processing of DNA lesions. UvrC both incises the 5' and 3' sides of the lesion. The N-terminal half is responsible for the 3' incision and the C-terminal half is responsible for the 5' incision. This Oceanobacillus iheyensis (strain DSM 14371 / CIP 107618 / JCM 11309 / KCTC 3954 / HTE831) protein is UvrABC system protein C.